The sequence spans 495 residues: Glucose-6-phosphate 1-dehydrogenase (495 aa).

Ser1 carries the post-translational modification N-acetylserine. Residues 15–22 (GASGDLAR), Arg49, and Lys149 contribute to the NADP(+) site. D-glucose 6-phosphate is bound by residues Lys149, 179–183 (HYLGK), Glu217, and Asp236. His241 functions as the Proton acceptor in the catalytic mechanism. Arg332 provides a ligand contact to NADP(+). Lys335 contributes to the D-glucose 6-phosphate binding site. Lys341, Arg345, and Arg367 together coordinate NADP(+). Gln369 is a binding site for D-glucose 6-phosphate. NADP(+)-binding positions include 375 to 377 (YLK), 395 to 397 (DLT), and Lys463.

This sequence belongs to the glucose-6-phosphate dehydrogenase family.

It catalyses the reaction D-glucose 6-phosphate + NADP(+) = 6-phospho-D-glucono-1,5-lactone + NADPH + H(+). The protein operates within carbohydrate degradation; pentose phosphate pathway; D-ribulose 5-phosphate from D-glucose 6-phosphate (oxidative stage): step 1/3. Its function is as follows. Catalyzes the rate-limiting step of the oxidative pentose-phosphate pathway, which represents a route for the dissimilation of carbohydrates besides glycolysis. The main function of this enzyme is to provide reducing power (NADPH) and pentose phosphates for fatty acid and nucleic acid synthesis. This Cyberlindnera jadinii (Torula yeast) protein is Glucose-6-phosphate 1-dehydrogenase.